The primary structure comprises 177 residues: Large ribosomal subunit protein uL6 (177 aa).

Positions 152-171 (RPPEPYKGKGVRYDDEEVRR) are enriched in basic and acidic residues. The tract at residues 152–177 (RPPEPYKGKGVRYDDEEVRRKEAKKK) is disordered.

The protein belongs to the universal ribosomal protein uL6 family. In terms of assembly, part of the 50S ribosomal subunit.

This protein binds to the 23S rRNA, and is important in its secondary structure. It is located near the subunit interface in the base of the L7/L12 stalk, and near the tRNA binding site of the peptidyltransferase center. This chain is Large ribosomal subunit protein uL6, found in Shewanella oneidensis (strain ATCC 700550 / JCM 31522 / CIP 106686 / LMG 19005 / NCIMB 14063 / MR-1).